The following is a 333-amino-acid chain: Adenosine deaminase (333 aa).

Zn(2+) is bound by residues His-12 and His-14. 3 residues coordinate substrate: His-14, Asp-16, and Gly-170. A Zn(2+)-binding site is contributed by His-197. Glu-200 serves as the catalytic Proton donor. Asp-278 is a binding site for Zn(2+). Asp-279 provides a ligand contact to substrate.

The protein belongs to the metallo-dependent hydrolases superfamily. Adenosine and AMP deaminases family. Adenosine deaminase subfamily. Zn(2+) serves as cofactor.

It catalyses the reaction adenosine + H2O + H(+) = inosine + NH4(+). The enzyme catalyses 2'-deoxyadenosine + H2O + H(+) = 2'-deoxyinosine + NH4(+). Functionally, catalyzes the hydrolytic deamination of adenosine and 2-deoxyadenosine. In Aliivibrio fischeri (strain MJ11) (Vibrio fischeri), this protein is Adenosine deaminase.